A 331-amino-acid polypeptide reads, in one-letter code: NADH-quinone oxidoreductase subunit H (331 aa).

Transmembrane regions (helical) follow at residues 6 to 26 (FFIV…ATLA), 45 to 65 (GPWM…IKLF), 78 to 98 (FIFL…MSVI), 120 to 140 (IGIL…LIGG), 167 to 187 (GLSL…DIVH), 193 to 213 (ITSW…IAAF), 241 to 261 (MRWG…SIVI), 263 to 283 (LIFL…MIFL), and 311 to 331 (CWKI…FVII).

The protein belongs to the complex I subunit 1 family. NDH-1 is composed of 14 different subunits. Subunits NuoA, H, J, K, L, M, N constitute the membrane sector of the complex.

Its subcellular location is the cell inner membrane. The catalysed reaction is a quinone + NADH + 5 H(+)(in) = a quinol + NAD(+) + 4 H(+)(out). Functionally, NDH-1 shuttles electrons from NADH, via FMN and iron-sulfur (Fe-S) centers, to quinones in the respiratory chain. The immediate electron acceptor for the enzyme in this species is believed to be ubiquinone. Couples the redox reaction to proton translocation (for every two electrons transferred, four hydrogen ions are translocated across the cytoplasmic membrane), and thus conserves the redox energy in a proton gradient. This subunit may bind ubiquinone. This chain is NADH-quinone oxidoreductase subunit H, found in Campylobacter hominis (strain ATCC BAA-381 / DSM 21671 / CCUG 45161 / LMG 19568 / NCTC 13146 / CH001A).